The chain runs to 452 residues: 3-phosphoshikimate 1-carboxyvinyltransferase (452 aa).

The span at 1 to 17 (MSHAAAAKPATARKSQA) shows a compositional bias: low complexity. Positions 1–26 (MSHAAAAKPATARKSQALSGTARVPG) are disordered. 3-phosphoshikimate contacts are provided by Lys-28, Ser-29, and Arg-33. Lys-28 lines the phosphoenolpyruvate pocket. Gly-100 and Arg-128 together coordinate phosphoenolpyruvate. 3-phosphoshikimate is bound by residues Ser-174, Gln-176, Asp-327, and Lys-354. Gln-176 is a phosphoenolpyruvate binding site. Asp-327 functions as the Proton acceptor in the catalytic mechanism. Phosphoenolpyruvate-binding residues include Arg-358 and Arg-409.

Belongs to the EPSP synthase family. Monomer.

Its subcellular location is the cytoplasm. The catalysed reaction is 3-phosphoshikimate + phosphoenolpyruvate = 5-O-(1-carboxyvinyl)-3-phosphoshikimate + phosphate. It functions in the pathway metabolic intermediate biosynthesis; chorismate biosynthesis; chorismate from D-erythrose 4-phosphate and phosphoenolpyruvate: step 6/7. Functionally, catalyzes the transfer of the enolpyruvyl moiety of phosphoenolpyruvate (PEP) to the 5-hydroxyl of shikimate-3-phosphate (S3P) to produce enolpyruvyl shikimate-3-phosphate and inorganic phosphate. This chain is 3-phosphoshikimate 1-carboxyvinyltransferase, found in Mesorhizobium japonicum (strain LMG 29417 / CECT 9101 / MAFF 303099) (Mesorhizobium loti (strain MAFF 303099)).